The chain runs to 64 residues: Large ribosomal subunit protein uL29 (64 aa).

Belongs to the universal ribosomal protein uL29 family.

The chain is Large ribosomal subunit protein uL29 from Acaryochloris marina (strain MBIC 11017).